A 564-amino-acid polypeptide reads, in one-letter code: Dihydroxy-acid dehydratase (564 aa).

Aspartate 80 is a binding site for Mg(2+). Residue cysteine 121 coordinates [2Fe-2S] cluster. Residues aspartate 122 and lysine 123 each coordinate Mg(2+). At lysine 123 the chain carries N6-carboxylysine. Cysteine 194 provides a ligand contact to [2Fe-2S] cluster. Glutamate 447 is a Mg(2+) binding site. Residue serine 473 is the Proton acceptor of the active site.

The protein belongs to the IlvD/Edd family. Homodimer. [2Fe-2S] cluster serves as cofactor. Requires Mg(2+) as cofactor.

It carries out the reaction (2R)-2,3-dihydroxy-3-methylbutanoate = 3-methyl-2-oxobutanoate + H2O. The catalysed reaction is (2R,3R)-2,3-dihydroxy-3-methylpentanoate = (S)-3-methyl-2-oxopentanoate + H2O. It functions in the pathway amino-acid biosynthesis; L-isoleucine biosynthesis; L-isoleucine from 2-oxobutanoate: step 3/4. It participates in amino-acid biosynthesis; L-valine biosynthesis; L-valine from pyruvate: step 3/4. In terms of biological role, functions in the biosynthesis of branched-chain amino acids. Catalyzes the dehydration of (2R,3R)-2,3-dihydroxy-3-methylpentanoate (2,3-dihydroxy-3-methylvalerate) into 2-oxo-3-methylpentanoate (2-oxo-3-methylvalerate) and of (2R)-2,3-dihydroxy-3-methylbutanoate (2,3-dihydroxyisovalerate) into 2-oxo-3-methylbutanoate (2-oxoisovalerate), the penultimate precursor to L-isoleucine and L-valine, respectively. The protein is Dihydroxy-acid dehydratase of Listeria welshimeri serovar 6b (strain ATCC 35897 / DSM 20650 / CCUG 15529 / CIP 8149 / NCTC 11857 / SLCC 5334 / V8).